We begin with the raw amino-acid sequence, 575 residues long: Protein NRD1 (575 aa).

The CID domain maps to Met-1 to Asp-153. The segment at Ser-225–Pro-282 is disordered. Positions Gly-244–Asn-257 are enriched in basic and acidic residues. A phosphoserine mark is found at Ser-263, Ser-265, and Ser-271. The region spanning Arg-339–Gly-409 is the RRM domain. A disordered region spans residues Val-468–Ser-575. Composition is skewed to polar residues over residues Lys-471–Gly-482 and Pro-491–Ser-501. 2 stretches are compositionally biased toward low complexity: residues Gln-517–Tyr-527 and Gln-549–Ser-575.

It localises to the nucleus. In terms of biological role, plays a role in sequence-specific regulation of nuclear pre-mRNA abundance. The polypeptide is Protein NRD1 (NRD1) (Saccharomyces cerevisiae (strain ATCC 204508 / S288c) (Baker's yeast)).